The following is a 177-amino-acid chain: MSRIGKKPIPVPSGVTASIEGQLIKAKGPKGELSYIVNDEVLVKLEDNIVSVTPRDQSKDARSKWGMSHSMIRNIFCGVKDGFEKKLEISGVGYRAALQGKNIQLSLGFSHDVVYKVPSDVSVAVPKPTEIVVSGIDKQKVGQIAAEIRGYRGPEPYKGKGIKYVDESLVRKEGKKK.

It belongs to the universal ribosomal protein uL6 family. As to quaternary structure, part of the 50S ribosomal subunit.

Its function is as follows. This protein binds to the 23S rRNA, and is important in its secondary structure. It is located near the subunit interface in the base of the L7/L12 stalk, and near the tRNA binding site of the peptidyltransferase center. This Bartonella bacilliformis (strain ATCC 35685 / KC583 / Herrer 020/F12,63) protein is Large ribosomal subunit protein uL6.